The sequence spans 228 residues: Tumor necrosis factor receptor superfamily member 18 (228 aa).

Residues 1–19 (MGAWAMLYGVSMLCVLDLG) form the signal peptide. Residues 20 to 153 (QPSVVEEPGC…EPLPTEQYGH (134 aa)) are Extracellular-facing. TNFR-Cys repeat units follow at residues 28 to 61 (GCGPGKVQNGSGNNTRCCSLYAPGKEDCPKERCI), 62 to 101 (CVTPEYHCGDPQCKICKHYPCQPGQRVESQGDIVFGFRCV), and 102 to 142 (ACAM…AVCI). Disulfide bonds link Cys29/Cys44, Cys62/Cys74, Cys69/Cys82, Cys103/Cys122, and Cys116/Cys141. Residues Asn36 and Asn40 are each glycosylated (N-linked (GlcNAc...) asparagine). 2 N-linked (GlcNAc...) asparagine glycosylation sites follow: Asn121 and Asn134. The chain crosses the membrane as a helical span at residues 154–174 (LTVIFLVMAACIFFLTTVQLG). At 175-228 (LHIWQLRRQHMCPRETQPFAEVQLSAEDACSFQFPEEERGEQTEEKCHLGGRWP) the chain is on the cytoplasmic side.

In terms of assembly, binds to TRAF1, TRAF2, and TRAF3, but not TRAF5 and TRAF6. Binds through its C-terminus to SIVA1/SIVA. As to expression, preferentially expressed in activated T lymphocytes.

Its subcellular location is the cell membrane. It is found in the secreted. In terms of biological role, receptor for TNFSF18. Seems to be involved in interactions between activated T-lymphocytes and endothelial cells and in the regulation of T-cell receptor-mediated cell death. Mediated NF-kappa-B activation via the TRAF2/NIK pathway. This Mus musculus (Mouse) protein is Tumor necrosis factor receptor superfamily member 18 (Tnfrsf18).